The chain runs to 496 residues: Fatty acyl-CoA reductase 8 (496 aa).

The protein belongs to the fatty acyl-CoA reductase family.

The enzyme catalyses a long-chain fatty acyl-CoA + 2 NADPH + 2 H(+) = a long-chain primary fatty alcohol + 2 NADP(+) + CoA. Its function is as follows. Catalyzes the reduction of fatty acyl-CoA to fatty alcohols. Catalyzes specifically the formation of C16:0 fatty alcohol. The chain is Fatty acyl-CoA reductase 8 (FAR8) from Arabidopsis thaliana (Mouse-ear cress).